Here is a 251-residue protein sequence, read N- to C-terminus: Imidazole glycerol phosphate synthase subunit HisF (251 aa).

Residues Asp-11 and Asp-130 contribute to the active site.

Belongs to the HisA/HisF family. Heterodimer of HisH and HisF.

The protein resides in the cytoplasm. It carries out the reaction 5-[(5-phospho-1-deoxy-D-ribulos-1-ylimino)methylamino]-1-(5-phospho-beta-D-ribosyl)imidazole-4-carboxamide + L-glutamine = D-erythro-1-(imidazol-4-yl)glycerol 3-phosphate + 5-amino-1-(5-phospho-beta-D-ribosyl)imidazole-4-carboxamide + L-glutamate + H(+). The protein operates within amino-acid biosynthesis; L-histidine biosynthesis; L-histidine from 5-phospho-alpha-D-ribose 1-diphosphate: step 5/9. Its function is as follows. IGPS catalyzes the conversion of PRFAR and glutamine to IGP, AICAR and glutamate. The HisF subunit catalyzes the cyclization activity that produces IGP and AICAR from PRFAR using the ammonia provided by the HisH subunit. In Chlorobium luteolum (strain DSM 273 / BCRC 81028 / 2530) (Pelodictyon luteolum), this protein is Imidazole glycerol phosphate synthase subunit HisF.